We begin with the raw amino-acid sequence, 559 residues long: NXPE family member 3 (559 aa).

The N-terminal stretch at Met-1–Val-30 is a signal peptide. N-linked (GlcNAc...) asparagine glycosylation is found at Asn-26, Asn-237, and Asn-346.

This sequence belongs to the NXPE family.

The protein localises to the secreted. The polypeptide is NXPE family member 3 (NXPE3) (Bos taurus (Bovine)).